A 281-amino-acid chain; its full sequence is MRILKSLAELRRWRQQQSEVALVPTMGNLHDGHLQLVKTALERCDNVVVSIFVNPMQFGANEDLDSYPRTLEADCQALDALGVSAVFTPQVNDVYPRGLDKQTRIEVPGISDILCGASRPGHFTGVATIVCKLFNMVQPQLAVFGEKDYQQLQVIRLMVQDLSLPVEVLGTATQRETSGLAMSSRNGYLSTEQKHQAAELYKTLEETKAKLSVNTDFGELEAAAKEKLTQAGFVPDYFSIRNAADLQEATPEDHEWVILAAAFMGKTRLIDNLRVTNAAAK.

26-33 (MGNLHDGH) provides a ligand contact to ATP. The active-site Proton donor is the His-33. A (R)-pantoate-binding site is contributed by Gln-57. Position 57 (Gln-57) interacts with beta-alanine. Position 145-148 (145-148 (GEKD)) interacts with ATP. Residue Gln-151 participates in (R)-pantoate binding. An ATP-binding site is contributed by 182–185 (MSSR).

This sequence belongs to the pantothenate synthetase family. As to quaternary structure, homodimer.

It localises to the cytoplasm. It catalyses the reaction (R)-pantoate + beta-alanine + ATP = (R)-pantothenate + AMP + diphosphate + H(+). It participates in cofactor biosynthesis; (R)-pantothenate biosynthesis; (R)-pantothenate from (R)-pantoate and beta-alanine: step 1/1. Its function is as follows. Catalyzes the condensation of pantoate with beta-alanine in an ATP-dependent reaction via a pantoyl-adenylate intermediate. The protein is Pantothenate synthetase of Idiomarina loihiensis (strain ATCC BAA-735 / DSM 15497 / L2-TR).